We begin with the raw amino-acid sequence, 227 residues long: UPF0758 protein PG_0894 (227 aa).

An MPN domain is found at 104–227 (SITDSRMAYR…YFSFADEGLL (124 aa)). 3 residues coordinate Zn(2+): His-175, His-177, and Asp-188. Positions 175 to 188 (HNHPSGTVRPSEQD) match the JAMM motif motif.

It belongs to the UPF0758 family.

This chain is UPF0758 protein PG_0894, found in Porphyromonas gingivalis (strain ATCC BAA-308 / W83).